The primary structure comprises 405 residues: 8-amino-7-oxononanoate synthase (405 aa).

Position 23 (Arg-23) interacts with substrate. 114-115 (GY) serves as a coordination point for pyridoxal 5'-phosphate. A substrate-binding site is contributed by His-139. 3 residues coordinate pyridoxal 5'-phosphate: Ser-185, His-213, and Thr-245. Lys-248 is modified (N6-(pyridoxal phosphate)lysine). Position 366 (Thr-366) interacts with substrate.

Belongs to the class-II pyridoxal-phosphate-dependent aminotransferase family. BioF subfamily. In terms of assembly, homodimer. Requires pyridoxal 5'-phosphate as cofactor.

It carries out the reaction 6-carboxyhexanoyl-[ACP] + L-alanine + H(+) = (8S)-8-amino-7-oxononanoate + holo-[ACP] + CO2. It participates in cofactor biosynthesis; biotin biosynthesis. In terms of biological role, catalyzes the decarboxylative condensation of pimeloyl-[acyl-carrier protein] and L-alanine to produce 8-amino-7-oxononanoate (AON), [acyl-carrier protein], and carbon dioxide. The protein is 8-amino-7-oxononanoate synthase of Delftia acidovorans (strain DSM 14801 / SPH-1).